We begin with the raw amino-acid sequence, 68 residues long: uncharacterized protein (68 aa).

The N-terminal stretch at 1-28 (MNKEQSADDPSVDLIRVKNMLNSTISMS) is a signal peptide.

This is an uncharacterized protein from Escherichia coli (strain K12).